Consider the following 242-residue polypeptide: MTTVSMRDMLQAGVHFGHQTRYWNPKMKPFIFGARNGVHIINLEHTVPMFNEALAFISNVASKKGKVLFVGTKRAASEAIKESAISCDQYYVDHRWLGGMLTNWKTVRQSIKRLKDLESQSVDGTFDKLTKKEALMRTRELEKLEKSLGGIKNMGGLPDVIFVIGADHEHIAIKEANNLGIPVVAVVDTNSSPDGINYIVPGNDDAMRSIRLYTESVAAAAKAGRGQDLAVQAEQDGFVEAE.

The protein belongs to the universal ribosomal protein uS2 family.

In Shewanella woodyi (strain ATCC 51908 / MS32), this protein is Small ribosomal subunit protein uS2.